Reading from the N-terminus, the 81-residue chain is ATP synthase subunit c, chloroplastic (81 aa).

Helical transmembrane passes span 3 to 23 (PLIS…ASIG) and 53 to 73 (LLLS…VALA).

Belongs to the ATPase C chain family. In terms of assembly, F-type ATPases have 2 components, F(1) - the catalytic core - and F(0) - the membrane proton channel. F(1) has five subunits: alpha(3), beta(3), gamma(1), delta(1), epsilon(1). F(0) has four main subunits: a(1), b(1), b'(1) and c(10-14). The alpha and beta chains form an alternating ring which encloses part of the gamma chain. F(1) is attached to F(0) by a central stalk formed by the gamma and epsilon chains, while a peripheral stalk is formed by the delta, b and b' chains.

It is found in the plastid. It localises to the chloroplast thylakoid membrane. Functionally, f(1)F(0) ATP synthase produces ATP from ADP in the presence of a proton or sodium gradient. F-type ATPases consist of two structural domains, F(1) containing the extramembraneous catalytic core and F(0) containing the membrane proton channel, linked together by a central stalk and a peripheral stalk. During catalysis, ATP synthesis in the catalytic domain of F(1) is coupled via a rotary mechanism of the central stalk subunits to proton translocation. Key component of the F(0) channel; it plays a direct role in translocation across the membrane. A homomeric c-ring of between 10-14 subunits forms the central stalk rotor element with the F(1) delta and epsilon subunits. This Huperzia lucidula (Shining clubmoss) protein is ATP synthase subunit c, chloroplastic.